A 131-amino-acid chain; its full sequence is MNLIEKIEQEEVARLSANKVLPSFAPGDTVVVSVNVVEGTRKRTQAFEGVVIAKRNRGLNSSFIVRKISSGEGVERTFQTYSPLIASVEVKRRGDVRRAKLYYLRDRSGKSARIKEKLQARVKPTAAVAAE.

The protein belongs to the bacterial ribosomal protein bL19 family.

Functionally, this protein is located at the 30S-50S ribosomal subunit interface and may play a role in the structure and function of the aminoacyl-tRNA binding site. This chain is Large ribosomal subunit protein bL19, found in Polynucleobacter necessarius subsp. necessarius (strain STIR1).